The sequence spans 726 residues: Catalase-peroxidase (726 aa).

The segment at residues 85-208 (WHSAGSYRIH…FAATEMGLIY (124 aa)) is a cross-link (tryptophyl-tyrosyl-methioninium (Trp-Tyr) (with M-234)). His86 serves as the catalytic Proton acceptor. Residues 208–234 (YVNPEGPMGNPDPSGSAKEIRLAFTRM) constitute a cross-link (tryptophyl-tyrosyl-methioninium (Tyr-Met) (with W-85)). His249 contacts heme b.

Belongs to the peroxidase family. Peroxidase/catalase subfamily. In terms of assembly, homodimer or homotetramer. The cofactor is heme b. Post-translationally, formation of the three residue Trp-Tyr-Met cross-link is important for the catalase, but not the peroxidase activity of the enzyme.

The catalysed reaction is H2O2 + AH2 = A + 2 H2O. The enzyme catalyses 2 H2O2 = O2 + 2 H2O. In terms of biological role, bifunctional enzyme with both catalase and broad-spectrum peroxidase activity. In Pseudothermotoga lettingae (strain ATCC BAA-301 / DSM 14385 / NBRC 107922 / TMO) (Thermotoga lettingae), this protein is Catalase-peroxidase.